The chain runs to 345 residues: MLSPSSSTVPAFGLHKLPHLVSDKVVKSMVPMELFTYSMVAEETKALVKRLFKKVSFQVSIFVQEQDYSVSFGQIGGAISNLGCEVLSQESEQVNGTQIWKMDENTEVQMEHYYDGQICRSYWKMKKETEAILKVLDYLRSVFNVKEVSVSFSIDEKYDAVEFLKSVKNRGVQLKNVNITGFEVTLEAEAYKNLLNECTETSELNVAPHVNWGFEYPVSNFSNFCQKFLTIEHAHWVTVHHLKSLRNCASVTLNNSKLTNQNLNWFLREWMEMSGASLRNVDLEVKQLDLPRIINGLKWTIKEGIISGFGGFQKLPPGDCFEIQRIDGVKATISRIGERFLMTRD.

Residues 11 to 55 (AFGLHKLPHLVSDKVVKSMVPMELFTYSMVAEETKALVKRLFKKV) form the F-box domain.

Its function is as follows. May have a role in embryogenesis. In Caenorhabditis elegans, this protein is Skn-1 dependent zygotic transcript 15 protein (sdz-15).